Reading from the N-terminus, the 83-residue chain is Heterin-1 (83 aa).

Residues methionine 1 to alanine 22 form the signal peptide. A propeptide spanning residues valine 66–proline 83 is cleaved from the precursor.

It belongs to the non-disulfide-bridged peptide (NDBP) superfamily. Long chain multifunctional peptide (group 2) family. As to expression, expressed by the venom gland.

Its subcellular location is the secreted. It is found in the target cell membrane. In terms of biological role, amphipathic peptide with potent activities against both Gram-positive and Gram-negative bacteria. Is the most active against the two Gram-positive Bacillus megaterium and Micrococcus luteus (MIC=4.0 uM for both). It has relatively low hemolytic activity against human erythrocytes. The polypeptide is Heterin-1 (Heterometrus spinifer (Asia giant forest scorpion)).